Consider the following 95-residue polypeptide: Protein TusB (95 aa).

It belongs to the DsrH/TusB family. In terms of assembly, heterohexamer, formed by a dimer of trimers. The hexameric TusBCD complex contains 2 copies each of TusB, TusC and TusD. The TusBCD complex interacts with TusE.

It is found in the cytoplasm. Part of a sulfur-relay system required for 2-thiolation of 5-methylaminomethyl-2-thiouridine (mnm(5)s(2)U) at tRNA wobble positions. This is Protein TusB from Yersinia enterocolitica serotype O:8 / biotype 1B (strain NCTC 13174 / 8081).